We begin with the raw amino-acid sequence, 390 residues long: Protein STRICTOSIDINE SYNTHASE-LIKE 3 (390 aa).

The signal sequence occupies residues 1–25 (MAMSILAKIFLVFAIYCAIDPFSHS). N-linked (GlcNAc...) asparagine glycans are attached at residues Asn95 and Asn108.

Belongs to the strictosidine synthase family.

The protein localises to the vacuole. This Arabidopsis thaliana (Mouse-ear cress) protein is Protein STRICTOSIDINE SYNTHASE-LIKE 3.